We begin with the raw amino-acid sequence, 182 residues long: MASSMISSATVATVSRATPAQATMVAPFTGLKSTAAFPATRKSNNDITSLASNGGRVQCMKVWPPLGLQKFETLSYLPPLSIESLAKQIEYLILKGWIPCLEFELEHPFVYRENNRSPGYYDGRYWVMWKLPMFGCTDATQVLAELQEASKTYPTSHIRIIGFDNKRQVQCISFIAYKPPAK.

Residues 1–58 (MASSMISSATVATVSRATPAQATMVAPFTGLKSTAAFPATRKSNNDITSLASNGGRVQ) constitute a chloroplast transit peptide.

It belongs to the RuBisCO small chain family. As to quaternary structure, heterohexadecamer of 8 large and 8 small subunits.

The protein resides in the plastid. It localises to the chloroplast. Functionally, ruBisCO catalyzes two reactions: the carboxylation of D-ribulose 1,5-bisphosphate, the primary event in carbon dioxide fixation, as well as the oxidative fragmentation of the pentose substrate. Both reactions occur simultaneously and in competition at the same active site. Although the small subunit is not catalytic it is essential for maximal activity. This Fagus crenata (Japanese beech) protein is Ribulose bisphosphate carboxylase small subunit, chloroplastic.